Here is an 87-residue protein sequence, read N- to C-terminus: Apoptosis inducing factor BLCAP B (87 aa).

2 helical membrane-spanning segments follow: residues 19–39 (PALW…FLLE) and 43–63 (CTIC…SCWG).

This sequence belongs to the BLCAP family.

It localises to the cytoplasm. The protein localises to the nucleus. Its subcellular location is the membrane. In terms of biological role, acts as a tumor suppressor; induces growth arrest at G(1)/S checkpoint and apoptosis via RB1-dependent and p53/TP53- and NF-kappa-B-independent mechanisms. Modulates expression of genes involved in the regulation of proliferation, cell cycle and apoptosis. This is Apoptosis inducing factor BLCAP B (blcap-b) from Xenopus laevis (African clawed frog).